The following is a 1234-amino-acid chain: Anion exchange protein 2 (1234 aa).

Positions 1 to 239 are disordered; sequence MSSAPRRPAS…YNLQERRRIG (239 aa). At 1 to 704 the chain is on the cytoplasmic side; sequence MSSAPRRPAS…SDFRDALDPQ (704 aa). Composition is skewed to basic and acidic residues over residues 39–49 and 58–75; these read LRTLGVERFEE and GGEEPGRSYGEEDFEYHR. Composition is skewed to basic residues over residues 76–85 and 94–110; these read QSSHHIHHPL and RRRKTPQGPGRKPRRRP. Phosphoserine is present on Ser-113. Acidic residues predominate over residues 120–133; it reads TIEEGEEDEDEVGE. 3 positions are modified to phosphoserine: Ser-145, Ser-171, and Ser-173. Over residues 207–216 the composition is skewed to gly residues; it reads TAGGDDGGAA. The residue at position 240 (Ser-240) is a Phosphoserine. Thr-254 is modified (phosphothreonine). Lys-271 is subject to N6-methyllysine. The interval 287-315 is disordered; the sequence is RKNAKGSTQAAREGREPGPTPRARPRAPH. A Phosphoserine modification is found at Ser-440. Positions 446–467 are disordered; the sequence is SLLGHHHAQGTESDPHVTEPLI. 4 helical membrane-spanning segments follow: residues 705–728, 734–771, 791–813, and 823–843; these read CLAAVIFIYFAALSPAITFGGLLG, LIGVSELIMSTALQGVIFCLLGAQPLLVIGFSGPLLVF, VWIGFWLVLLALLMVALEGSFLV, and IFAFLISLIFIYETFYKLIKI. A membrane (anion exchange) region spans residues 705 to 1234; that stretch reads CLAAVIFIYF…DEYNEMPMPV (530 aa). Residues 844–893 lie on the Extracellular side of the membrane; that stretch reads FQEHPLHGCSVSNDSEADSSSNNMTWAATTLAPDNSSASGQERPRGQPNT. Asn-856, Asn-866, and Asn-878 each carry an N-linked (GlcNAc...) asparagine glycan. A helical transmembrane segment spans residues 894-911; sequence ALLSLVLMAGTFFIAFFL. Over 912-926 the chain is Cytoplasmic; it reads RKFKNSRFFPGRIRR. Transmembrane regions (helical) follow at residues 927-947, 981-1003, 1029-1050, 1084-1129, and 1156-1192; these read VIGDFGVPIAILIMVLVDYSI, PFPVWMMVASLLPAVLVFILIFM, LLLIVAMGGICALFGLPWLAAA, VTGL…IQFY, and MHLFTALQLLCLALLWAVMSTAASLAFPFILILTVPL. Cys-1166 carries the S-palmitoyl cysteine lipid modification.

Belongs to the anion exchanger (TC 2.A.31) family. In terms of tissue distribution, expressed in the parotid and submandibular glands (at protein level). Expressed in the gastric mucosa (at protein level). Expressed in the choroid plexus epithelium (at protein level). Expressed in the liver and gallbladder.

The protein resides in the apical cell membrane. It is found in the basolateral cell membrane. The enzyme catalyses hydrogencarbonate(in) + chloride(out) = hydrogencarbonate(out) + chloride(in). Its activity is regulated as follows. Inhibited by 4,4'-diisothiocyanatostilbene-2,2'-disulfonic acid (DIDS). Sodium-independent anion exchanger which mediates the electroneutral exchange of chloride for bicarbonate ions across the cell membrane. Plays an important role in osteoclast differentiation and function. Regulates bone resorption and calpain-dependent actin cytoskeleton organization in osteoclasts via anion exchange-dependent control of pH. Essential for intracellular pH regulation in CD8(+) T-cells upon CD3 stimulation, modulating CD8(+) T-cell responses. The sequence is that of Anion exchange protein 2 (Slc4a2) from Rattus norvegicus (Rat).